Reading from the N-terminus, the 598-residue chain is NADH-quinone oxidoreductase subunit C/D (598 aa).

The interval 1 to 190 (MSIFTQEVSA…EAFSLDDERL (190 aa)) is NADH dehydrogenase I subunit C. Positions 214-598 (DYLFLNLGPN…IDFVMADVDR (385 aa)) are NADH dehydrogenase I subunit D.

The protein in the N-terminal section; belongs to the complex I 30 kDa subunit family. This sequence in the C-terminal section; belongs to the complex I 49 kDa subunit family. As to quaternary structure, NDH-1 is composed of 13 different subunits. Subunits NuoB, CD, E, F, and G constitute the peripheral sector of the complex.

It is found in the cell inner membrane. It carries out the reaction a quinone + NADH + 5 H(+)(in) = a quinol + NAD(+) + 4 H(+)(out). NDH-1 shuttles electrons from NADH, via FMN and iron-sulfur (Fe-S) centers, to quinones in the respiratory chain. The immediate electron acceptor for the enzyme in this species is believed to be ubiquinone. Couples the redox reaction to proton translocation (for every two electrons transferred, four hydrogen ions are translocated across the cytoplasmic membrane), and thus conserves the redox energy in a proton gradient. In Shewanella woodyi (strain ATCC 51908 / MS32), this protein is NADH-quinone oxidoreductase subunit C/D.